The following is a 518-amino-acid chain: Glutamate--cysteine ligase (518 aa).

It belongs to the glutamate--cysteine ligase type 1 family. Type 1 subfamily.

The enzyme catalyses L-cysteine + L-glutamate + ATP = gamma-L-glutamyl-L-cysteine + ADP + phosphate + H(+). Its pathway is sulfur metabolism; glutathione biosynthesis; glutathione from L-cysteine and L-glutamate: step 1/2. This Shigella dysenteriae serotype 1 (strain Sd197) protein is Glutamate--cysteine ligase.